Reading from the N-terminus, the 126-residue chain is DNA-directed RNA polymerase I subunit RPA12 (126 aa).

Cysteine 20, cysteine 23, cysteine 38, cysteine 41, cysteine 87, and cysteine 90 together coordinate Zn(2+). The segment at 20 to 41 (CSDCGSVLPLPGAQDTVTCTRC) adopts a C4-type zinc-finger fold. The TFIIS-type zinc finger occupies 83 to 123 (VDRRCPRCGHEGMAYHTRQMRSADEGQTVFYTCTNCKFQEK). Residues 106–107 (DE) carry the Hairpin motif. Residues cysteine 115 and cysteine 118 each contribute to the Zn(2+) site.

It belongs to the archaeal RpoM/eukaryotic RPA12/RPB9/RPC11 RNA polymerase family. As to quaternary structure, component of the RNA polymerase I (Pol I) complex consisting of 13 subunits: a ten-subunit catalytic core composed of POLR1A/RPA1, POLR1B/RPA2, POLR1C/RPAC1, POLR1D/RPAC2, POLR1H/RPA12, POLR2E/RPABC1, POLR2F/RPABC2, POLR2H/RPABC3, POLR2K/RPABC4 and POLR2L/RPABC5; a mobile stalk subunit POLR1F/RPA43 protruding from the core and additional subunits homologous to general transcription factors POLR1E/RPA49 and POLR1G/RPA34. Part of Pol I pre-initiation complex (PIC), in which Pol I core assembles with RRN3 and promoter-bound UTBF and SL1/TIF-IB complex.

Its subcellular location is the nucleus. The protein resides in the nucleolus. In terms of biological role, core component of RNA polymerase I (Pol I), a DNA-dependent RNA polymerase which synthesizes ribosomal RNA precursors using the four ribonucleoside triphosphates as substrates. Can mediate Pol I proofreading of the nascent RNA transcript. Anchors into the Pol I active site to monitor transcription fidelity and cleave mis-incorporated 5'-ribonucleotides. The protein is DNA-directed RNA polymerase I subunit RPA12 of Macaca mulatta (Rhesus macaque).